The chain runs to 961 residues: MGQGEELRAAVDSGGMGLLGTKCPLPLLLLFIMGGKALDSPPQILVHPQDQLLQGSGPAKMSCRASGQPLPTIRWLLNGQPLSMATPDLHYLQSDGTLLLHRPPTHGRPQDDQNILSAILGVYTCEASNRLGTAVSRGARLSVAVLQEDFRIQPRDTVAVVGESLVLECGPPWGYPKPSVSWWKDGKPLVLQPGKRTVSGDSLMVARAEKNDTGTYMCMATNNAGQRESRAARVSIQESPDHKEHLELLAVRIQLENVTLLNPEPVKGPKPGPAVWLSWKVSGPAAPAQSYTALFRAQRDPRDQGSPWTEVLLDGLLNAKLGGLRWGQDYEFKVRPSSGRARGPDSNVLLLRLPEQVPSAPPQEVTLRPGNGSVFVSWAPPPAENHNGFIRGYQVWSLGNASLPAANWTVVGEQTQLEIAARMPGSYCVQVAAVTGAGAGEPSIPVCLLLEQAMEQSARDPSKHVSWTLEQLRATLKRPEVIASGAVLLWLLLLGIAVCIYRRRKAGVHLGPGLYRYTSEDAILKHRMDHSDSPWLADTWRSTSGSRDLSSSSSLSSRLGVDPRDPLDGRRSLISWDPRSPGVPLLPDTSTFYGSLIAEQTSSPPVRPSPQTPAARRLPPKLTGTSSPWASSDSLCSRRGLCSPRMSLAPAEAWKAKKKQELHQANSSPLLQGSHPMEIWAWELGSRASKNLSQSPGPNTCSPREAPGAVVAWRALGPQLHRNSSELAARPLPPTPLSLRGAPSHDPQSQCVEKLQAPSSDPLPAAPLSVLNSSRPSSPQASFLSVPSPGSSNLSSSSLSSLEEEDQDSVLTPEEVALCLELSDGEETPTNSVSPMPRAPSPPATYGYISIPTSSGLADMGRAGGGVGSEVGNLLCPPRLCPTPTPSEGSLANGWGSASEDNVPSARASLVSSSDGSFLADAHFARALAVAVDSFGFSLEPREADCVFTGMWARPPPLEWT.

The first 37 residues, 1–37 (MGQGEELRAAVDSGGMGLLGTKCPLPLLLLFIMGGKA), serve as a signal peptide directing secretion. Ig-like C2-type domains follow at residues 42-142 (PQIL…ARLS) and 148-235 (EDFR…ARVS). Disulfide bonds link C63/C125 and C169/C218. N-linked (GlcNAc...) asparagine glycans are attached at residues N211 and N257. Fibronectin type-III domains follow at residues 259–356 (TLLN…LPEQ) and 358–453 (PSAP…LEQA). Residues N371, N400, and N407 are each glycosylated (N-linked (GlcNAc...) asparagine). Positions 544–559 (SGSRDLSSSSSLSSRL) are enriched in low complexity. 2 disordered regions span residues 544–563 (SGSRDLSSSSSLSSRLGVDP) and 600–634 (QTSSPPVRPSPQTPAARRLPPKLTGTSSPWASSDS). The segment covering 623-634 (TGTSSPWASSDS) has biased composition (polar residues). N691 and N723 each carry an N-linked (GlcNAc...) asparagine glycan. Residues 726-810 (ELAARPLPPT…SLEEEDQDSV (85 aa)) form a disordered region. Over residues 755–769 (LQAPSSDPLPAAPLS) the composition is skewed to low complexity. Over residues 770–783 (VLNSSRPSSPQASF) the composition is skewed to polar residues. N-linked (GlcNAc...) asparagine glycans are attached at residues N772 and N793. Residues 784–801 (LSVPSPGSSNLSSSSLSS) are compositionally biased toward low complexity. S823 bears the Phosphoserine mark.

This sequence belongs to the immunoglobulin superfamily. ROBO family. Interacts with SLIT2 and ENAH.

Functionally, receptor for Slit proteins, at least for SLIT2, and seems to be involved in angiogenesis and vascular patterning. May mediate the inhibition of primary endothelial cell migration by Slit proteins. Involved in the maintenance of endothelial barrier organization and function. The polypeptide is Roundabout homolog 4 (Robo4) (Rattus norvegicus (Rat)).